The following is a 65-amino-acid chain: MGTRKFFLLHHDKIIRSIIMANGIKNYWQDDGRFDRCSEIFFLSQKQGRGLYRFWLGNKKQGNRD.

Its function is as follows. Probably facilitates nickel incorporation. May constitute a multicomponent high-affinity nickel transporter. Not essential for the expression of catalytically active urease. The sequence is that of Urease accessory protein UreI (ureI) from Bacillus sp. (strain TB-90).